Here is a 428-residue protein sequence, read N- to C-terminus: Histidinol dehydrogenase (428 aa).

Residues serine 232, glutamine 254, and histidine 257 each coordinate substrate. Zn(2+) is bound by residues glutamine 254 and histidine 257. Residues glutamate 324 and histidine 325 each act as proton acceptor in the active site. 4 residues coordinate substrate: histidine 325, aspartate 358, glutamate 412, and histidine 417. A Zn(2+)-binding site is contributed by aspartate 358. A Zn(2+)-binding site is contributed by histidine 417.

Belongs to the histidinol dehydrogenase family. Requires Zn(2+) as cofactor.

It catalyses the reaction L-histidinol + 2 NAD(+) + H2O = L-histidine + 2 NADH + 3 H(+). The protein operates within amino-acid biosynthesis; L-histidine biosynthesis; L-histidine from 5-phospho-alpha-D-ribose 1-diphosphate: step 9/9. Its function is as follows. Catalyzes the sequential NAD-dependent oxidations of L-histidinol to L-histidinaldehyde and then to L-histidine. This Thermotoga maritima (strain ATCC 43589 / DSM 3109 / JCM 10099 / NBRC 100826 / MSB8) protein is Histidinol dehydrogenase.